Consider the following 420-residue polypeptide: Pyridinium-3,5-bisthiocarboxylic acid mononucleotide nickel insertion protein (420 aa).

This sequence belongs to the LarC family.

The catalysed reaction is Ni(II)-pyridinium-3,5-bisthiocarboxylate mononucleotide = pyridinium-3,5-bisthiocarboxylate mononucleotide + Ni(2+). Its function is as follows. Involved in the biosynthesis of a nickel-pincer cofactor ((SCS)Ni(II) pincer complex). Binds Ni(2+), and functions in nickel delivery to pyridinium-3,5-bisthiocarboxylic acid mononucleotide (P2TMN), to form the mature cofactor. Is required for the activation of the lactate racemase LarA. May also be involved in the activation of other nickel-pincer cofactor-dependent enzymes. This Lactiplantibacillus plantarum (strain ATCC BAA-793 / NCIMB 8826 / WCFS1) (Lactobacillus plantarum) protein is Pyridinium-3,5-bisthiocarboxylic acid mononucleotide nickel insertion protein.